The primary structure comprises 241 residues: NEP1-interacting protein 2 (241 aa).

The segment at 1 to 20 (MASSSSSSYRFQSGSYPLSS) is disordered. Residues 1–36 (MASSSSSSYRFQSGSYPLSSSPSLGNFVERIKDACH) lie on the Lumenal, thylakoid side of the membrane. The helical transmembrane segment at 37–57 (FLVSAVLGTIISAILTFFFAL) threads the bilayer. The Stromal segment spans residues 58–76 (VGTLLGALTGALIGQETES). The helical transmembrane segment at 77–97 (GFIRGAAIGAISGAVFSIEVF) threads the bilayer. Over 98–109 (ESSLDLWKSDES) the chain is Lumenal, thylakoid. A helical membrane pass occupies residues 110 to 130 (GFGCFLYLIDVIVSLLSGRLV). Residues 131–241 (RERIGPAMLS…GSCPMCRRDI (111 aa)) are Stromal-facing. The RING-type; atypical zinc finger occupies 196–238 (CSVCLQDFQLGETVRSLPHCHHMFHLPCIDNWLLRHGSCPMCR).

The protein belongs to the RING-type zinc finger family. NIP subfamily. In terms of assembly, interacts with RPOT2.

The protein resides in the plastid. It is found in the chloroplast thylakoid membrane. In terms of biological role, intrinsic thylakoid membrane protein that fixes RPOT2 on the stromal side of the thylakoid membrane. The chain is NEP1-interacting protein 2 (NIP2) from Arabidopsis thaliana (Mouse-ear cress).